The primary structure comprises 142 residues: Large ribosomal subunit protein uL13c (142 aa).

This sequence belongs to the universal ribosomal protein uL13 family. Part of the 50S ribosomal subunit.

The protein resides in the plastid. The protein localises to the chloroplast. This is Large ribosomal subunit protein uL13c from Porphyra purpurea (Red seaweed).